The sequence spans 853 residues: DNA mismatch repair protein MutS (853 aa).

613-620 (GPNMGGKS) contributes to the ATP binding site.

It belongs to the DNA mismatch repair MutS family.

Functionally, this protein is involved in the repair of mismatches in DNA. It is possible that it carries out the mismatch recognition step. This protein has a weak ATPase activity. This is DNA mismatch repair protein MutS from Vibrio atlanticus (strain LGP32) (Vibrio splendidus (strain Mel32)).